Consider the following 804-residue polypeptide: DEP domain-containing protein 1A (804 aa).

Residues 24-108 (FRVGMPLRKH…DNNQLFRFPA (85 aa)) form the DEP domain. One can recognise a Rho-GAP domain in the interval 282 to 322 (DYFLNLPEPLLTFEYYELFVNILVVCGYITVSDRTSGIHKI). Phosphoserine is present on Ser-513. The interval 592-647 (AINALQLCCLLLPPPNRRKLQLLMRMISRMSQNVDMPKLHEQIGTRSLMINTFSRC) is interaction with ZNF224. Residues 726–760 (EQKISTSQAAIAELLENIVRSKSLSLKEKRRKLKQ) adopt a coiled-coil conformation.

As to quaternary structure, can form dimers. Interacts with ZNF224.

The protein resides in the nucleus. May be involved in transcriptional regulation as a transcriptional corepressor. The DEPDC1A-ZNF224 complex may play a critical role in bladder carcinogenesis by repressing the transcription of the A20 gene, leading to transport of NF-KB protein into the nucleus, resulting in suppression of apoptosis of bladder cancer cells. In Mus musculus (Mouse), this protein is DEP domain-containing protein 1A (Depdc1a).